We begin with the raw amino-acid sequence, 195 residues long: dITP/XTP pyrophosphatase (195 aa).

A substrate-binding site is contributed by 8 to 13 (SNNQGK). 2 residues coordinate Mg(2+): glutamate 39 and aspartate 68. Catalysis depends on aspartate 68, which acts as the Proton acceptor. Substrate contacts are provided by residues serine 69, 149 to 152 (FGYD), lysine 172, and 177 to 178 (HR).

Belongs to the HAM1 NTPase family. In terms of assembly, homodimer. Mg(2+) is required as a cofactor.

It catalyses the reaction XTP + H2O = XMP + diphosphate + H(+). The catalysed reaction is dITP + H2O = dIMP + diphosphate + H(+). The enzyme catalyses ITP + H2O = IMP + diphosphate + H(+). Pyrophosphatase that catalyzes the hydrolysis of nucleoside triphosphates to their monophosphate derivatives, with a high preference for the non-canonical purine nucleotides XTP (xanthosine triphosphate), dITP (deoxyinosine triphosphate) and ITP. Seems to function as a house-cleaning enzyme that removes non-canonical purine nucleotides from the nucleotide pool, thus preventing their incorporation into DNA/RNA and avoiding chromosomal lesions. In Staphylococcus aureus (strain MRSA252), this protein is dITP/XTP pyrophosphatase.